Here is a 509-residue protein sequence, read N- to C-terminus: MWELVCLLLLILAYLFWPKPKTSDAKFPRSLPFLPLVGSLPFLPRHGHMHVNFFKLQEKYGPIYSLRLGTIPTVIIGQYQLAREVLIKKGKEFSGRPQMVTLGLLSNQGKGIAFADSDDAWQLHRKLALSSFALFRDGDQRLETIICQEASSLCDLLLTHNEESVDLSQPIFMSVTNIICAICFSTSYENRDPILTTIQTFTEGILNCLDNENLVDIFPWLTIFPNKTLEKIKRHVKVRDEVLIDMLEKCKEKFNNDSISNLTDILIQAKMNADNNNTTDHQGSFSDSHILSTVGDFFGAGIETTTSVLCWIVAFLLHNPEVKKKIQKEIDQNIGFSRTPTFNDRNHLLMLEATIREVLRIRPVAPMLIPHKANIDSSIGEFTIPKDTHVVINLWALHHNEKEWDQPDRFMPERFLDATGSHLITPSLSYLPFGAGPRACIGEVLARQVLFLYVACLLQRFDLDVPDGAPMPCLKGDPKVVFLIDPFKVKVTVRQAWKDAQAEVGTWRP.

Residue Cys-440 participates in heme binding.

Belongs to the cytochrome P450 family. Heme is required as a cofactor.

The protein resides in the endoplasmic reticulum membrane. It is found in the microsome membrane. It carries out the reaction a C21-steroid + reduced [NADPH--hemoprotein reductase] + O2 = a 17alpha-hydroxy-C21-steroid + oxidized [NADPH--hemoprotein reductase] + H2O + H(+). The catalysed reaction is progesterone + reduced [NADPH--hemoprotein reductase] + O2 = 17alpha-hydroxyprogesterone + oxidized [NADPH--hemoprotein reductase] + H2O + H(+). It catalyses the reaction pregnenolone + reduced [NADPH--hemoprotein reductase] + O2 = 17alpha-hydroxypregnenolone + oxidized [NADPH--hemoprotein reductase] + H2O + H(+). The enzyme catalyses 17alpha-hydroxyprogesterone + reduced [NADPH--hemoprotein reductase] + O2 = androst-4-ene-3,17-dione + acetate + oxidized [NADPH--hemoprotein reductase] + H2O + 2 H(+). It carries out the reaction 17alpha-hydroxyprogesterone + reduced [NADPH--hemoprotein reductase] + O2 = 16alpha,17alpha-dihydroxyprogesterone + oxidized [NADPH--hemoprotein reductase] + H2O + H(+). The catalysed reaction is 16alpha,17alpha-dihydroxyprogesterone + reduced [NADPH--hemoprotein reductase] + O2 = 6beta,16alpha,17alpha-trihydroxyprogesterone + oxidized [NADPH--hemoprotein reductase] + H2O + H(+). It catalyses the reaction 17alpha-hydroxypregnenolone + reduced [NADPH--hemoprotein reductase] + O2 = 3beta-hydroxyandrost-5-en-17-one + acetate + oxidized [NADPH--hemoprotein reductase] + H2O + 2 H(+). The enzyme catalyses 16alpha,17alpha-dihydroxypregnenolone + reduced [NADPH--hemoprotein reductase] + O2 = 3beta,16alpha-dihydroxy-androst-5-en-17-one + acetate + oxidized [NADPH--hemoprotein reductase] + H2O + 2 H(+). It carries out the reaction 3beta-hydroxyandrost-5-en-17-one + reduced [NADPH--hemoprotein reductase] + O2 = 3beta,16alpha-dihydroxy-androst-5-en-17-one + oxidized [NADPH--hemoprotein reductase] + H2O + H(+). The catalysed reaction is androst-4-ene-3,17-dione + reduced [NADPH--hemoprotein reductase] + O2 = 16alpha-hydroxyandrost-4-ene-3,17-dione + oxidized [NADPH--hemoprotein reductase] + H2O + H(+). It participates in steroid hormone biosynthesis. Its pathway is steroid biosynthesis; glucocorticoid biosynthesis. Its activity is regulated as follows. Regulated predominantly by intracellular cAMP levels. The 17,20-lyase activity is stimulated by cytochrome b5, which acts as an allosteric effector increasing the Vmax of the lyase activity. A cytochrome P450 monooxygenase involved in corticoid and androgen biosynthesis. Catalyzes 17-alpha hydroxylation of C21 steroids, which is common for both pathways. A second oxidative step, required only for androgen synthesis, involves an acyl-carbon cleavage. The 17-alpha hydroxy intermediates, as part of adrenal glucocorticoids biosynthesis pathway, are precursors of cortisol. Hydroxylates steroid hormones, pregnenolone and progesterone to form 17-alpha hydroxy metabolites, followed by the cleavage of the C17-C20 bond to form C19 steroids, dehydroepiandrosterone (DHEA) and androstenedione. Has 16-alpha hydroxylase activity. Catalyzes 16-alpha hydroxylation of 17-alpha hydroxy pregnenolone, followed by the cleavage of the C17-C20 bond to form 16-alpha-hydroxy DHEA. Also 16-alpha hydroxylates androgens, relevant for estriol synthesis. Mechanistically, uses molecular oxygen inserting one oxygen atom into a substrate, and reducing the second into a water molecule, with two electrons provided by NADPH via cytochrome P450 reductase (CPR; NADPH-ferrihemoprotein reductase). The protein is Steroid 17-alpha-hydroxylase/17,20 lyase (Cyp17a1) of Peromyscus leucopus (White-footed mouse).